The primary structure comprises 90 residues: Probable Fe(2+)-trafficking protein (90 aa).

Belongs to the Fe(2+)-trafficking protein family.

Could be a mediator in iron transactions between iron acquisition and iron-requiring processes, such as synthesis and/or repair of Fe-S clusters in biosynthetic enzymes. The protein is Probable Fe(2+)-trafficking protein of Azoarcus sp. (strain BH72).